Reading from the N-terminus, the 122-residue chain is Ribonuclease P protein component (122 aa).

It belongs to the RnpA family. Consists of a catalytic RNA component (M1 or rnpB) and a protein subunit.

The enzyme catalyses Endonucleolytic cleavage of RNA, removing 5'-extranucleotides from tRNA precursor.. Functionally, RNaseP catalyzes the removal of the 5'-leader sequence from pre-tRNA to produce the mature 5'-terminus. It can also cleave other RNA substrates such as 4.5S RNA. The protein component plays an auxiliary but essential role in vivo by binding to the 5'-leader sequence and broadening the substrate specificity of the ribozyme. The polypeptide is Ribonuclease P protein component (Synechococcus elongatus (strain ATCC 33912 / PCC 7942 / FACHB-805) (Anacystis nidulans R2)).